A 229-amino-acid chain; its full sequence is Uracil-DNA glycosylase (229 aa).

Catalysis depends on Asp64, which acts as the Proton acceptor.

The protein belongs to the uracil-DNA glycosylase (UDG) superfamily. UNG family.

It localises to the cytoplasm. The catalysed reaction is Hydrolyzes single-stranded DNA or mismatched double-stranded DNA and polynucleotides, releasing free uracil.. Its function is as follows. Excises uracil residues from the DNA which can arise as a result of misincorporation of dUMP residues by DNA polymerase or due to deamination of cytosine. The sequence is that of Uracil-DNA glycosylase from Shigella flexneri serotype 5b (strain 8401).